We begin with the raw amino-acid sequence, 425 residues long: Riboflavin biosynthesis protein RibBA (425 aa).

The interval 1-204 (MTRLDSVERA…IADLIEWRRK (204 aa)) is DHBP synthase. D-ribulose 5-phosphate-binding positions include 28–29 (RE), Asp-33, 141–145 (RPGHT), and Glu-165. Residue Glu-29 coordinates Mg(2+). His-144 is a Mg(2+) binding site. The segment at 205–425 (HEKHIERVAE…HLPGEFGGAL (221 aa)) is GTP cyclohydrolase II. 259–263 (RVHSE) contacts GTP. Cys-264, Cys-275, and Cys-277 together coordinate Zn(2+). Residues Gln-280, 303–305 (EGR), and Thr-325 contribute to the GTP site. Asp-337 functions as the Proton acceptor; for GTP cyclohydrolase activity in the catalytic mechanism. Arg-339 (nucleophile; for GTP cyclohydrolase activity) is an active-site residue. Positions 360 and 365 each coordinate GTP.

The protein in the N-terminal section; belongs to the DHBP synthase family. In the C-terminal section; belongs to the GTP cyclohydrolase II family. It depends on Mg(2+) as a cofactor. Mn(2+) is required as a cofactor. Requires Zn(2+) as cofactor.

It carries out the reaction D-ribulose 5-phosphate = (2S)-2-hydroxy-3-oxobutyl phosphate + formate + H(+). It catalyses the reaction GTP + 4 H2O = 2,5-diamino-6-hydroxy-4-(5-phosphoribosylamino)-pyrimidine + formate + 2 phosphate + 3 H(+). The protein operates within cofactor biosynthesis; riboflavin biosynthesis; 2-hydroxy-3-oxobutyl phosphate from D-ribulose 5-phosphate: step 1/1. It functions in the pathway cofactor biosynthesis; riboflavin biosynthesis; 5-amino-6-(D-ribitylamino)uracil from GTP: step 1/4. Catalyzes the conversion of D-ribulose 5-phosphate to formate and 3,4-dihydroxy-2-butanone 4-phosphate. Its function is as follows. Catalyzes the conversion of GTP to 2,5-diamino-6-ribosylamino-4(3H)-pyrimidinone 5'-phosphate (DARP), formate and pyrophosphate. The chain is Riboflavin biosynthesis protein RibBA from Mycobacterium marinum (strain ATCC BAA-535 / M).